A 328-amino-acid chain; its full sequence is 4-hydroxy-2-oxoglutarate aldolase, mitochondrial (328 aa).

The N-terminal 26 residues, Met1–Leu26, are a transit peptide targeting the mitochondrion. Position 76 to 77 (Ser76 to Asn77) interacts with substrate. The active-site Schiff-base intermediate with substrate is Lys195. The substrate site is built by Ser197 and Gly221.

The protein belongs to the DapA family. In terms of assembly, homotetramer.

Its subcellular location is the mitochondrion. It catalyses the reaction (4S)-4-hydroxy-2-oxoglutarate = glyoxylate + pyruvate. The enzyme catalyses (4R)-4-hydroxy-2-oxoglutarate = glyoxylate + pyruvate. Its activity is regulated as follows. Inhibited by divalent cations. Functionally, catalyzes the final step in the metabolic pathway of hydroxyproline. This is 4-hydroxy-2-oxoglutarate aldolase, mitochondrial (hoga1) from Xenopus tropicalis (Western clawed frog).